We begin with the raw amino-acid sequence, 210 residues long: NAD(P)H-quinone oxidoreductase subunit I (210 aa).

4Fe-4S ferredoxin-type domains are found at residues 55-84 (GRIH…VDWV) and 95-124 (RNYS…MTEE). [4Fe-4S] cluster contacts are provided by C64, C67, C70, C74, C104, C107, C110, and C114.

It belongs to the complex I 23 kDa subunit family. As to quaternary structure, NDH-1 is composed of at least 11 different subunits. [4Fe-4S] cluster serves as cofactor.

It is found in the cellular thylakoid membrane. The catalysed reaction is a plastoquinone + NADH + (n+1) H(+)(in) = a plastoquinol + NAD(+) + n H(+)(out). The enzyme catalyses a plastoquinone + NADPH + (n+1) H(+)(in) = a plastoquinol + NADP(+) + n H(+)(out). Its function is as follows. NDH-1 shuttles electrons from an unknown electron donor, via FMN and iron-sulfur (Fe-S) centers, to quinones in the respiratory and/or the photosynthetic chain. The immediate electron acceptor for the enzyme in this species is believed to be plastoquinone. Couples the redox reaction to proton translocation, and thus conserves the redox energy in a proton gradient. The protein is NAD(P)H-quinone oxidoreductase subunit I of Synechococcus sp. (strain CC9902).